Consider the following 220-residue polypeptide: Phosphatidylserine decarboxylase proenzyme (220 aa).

The active-site Schiff-base intermediate with substrate; via pyruvic acid is serine 188. At serine 188 the chain carries Pyruvic acid (Ser); by autocatalysis.

Belongs to the phosphatidylserine decarboxylase family. PSD-A subfamily. As to quaternary structure, heterodimer of a large membrane-associated beta subunit and a small pyruvoyl-containing alpha subunit. The cofactor is pyruvate. Is synthesized initially as an inactive proenzyme. Formation of the active enzyme involves a self-maturation process in which the active site pyruvoyl group is generated from an internal serine residue via an autocatalytic post-translational modification. Two non-identical subunits are generated from the proenzyme in this reaction, and the pyruvate is formed at the N-terminus of the alpha chain, which is derived from the carboxyl end of the proenzyme. The post-translation cleavage follows an unusual pathway, termed non-hydrolytic serinolysis, in which the side chain hydroxyl group of the serine supplies its oxygen atom to form the C-terminus of the beta chain, while the remainder of the serine residue undergoes an oxidative deamination to produce ammonia and the pyruvoyl prosthetic group on the alpha chain.

It is found in the cell membrane. The catalysed reaction is a 1,2-diacyl-sn-glycero-3-phospho-L-serine + H(+) = a 1,2-diacyl-sn-glycero-3-phosphoethanolamine + CO2. It functions in the pathway phospholipid metabolism; phosphatidylethanolamine biosynthesis; phosphatidylethanolamine from CDP-diacylglycerol: step 2/2. Functionally, catalyzes the formation of phosphatidylethanolamine (PtdEtn) from phosphatidylserine (PtdSer). The chain is Phosphatidylserine decarboxylase proenzyme from Cytophaga hutchinsonii (strain ATCC 33406 / DSM 1761 / CIP 103989 / NBRC 15051 / NCIMB 9469 / D465).